A 136-amino-acid polypeptide reads, in one-letter code: Histone H3.2 (136 aa).

A disordered region spans residues 1-43; that stretch reads MARTKQTARKSTGGKAPRKQLATKAARKSAPATGGVKKPHRFR. N6,N6,N6-trimethyllysine; alternate occurs at positions 5 and 10. Lysine 5 and lysine 10 each carry N6,N6-dimethyllysine; alternate. An N6-methyllysine; alternate mark is found at lysine 5 and lysine 10. Residue lysine 10 is modified to N6-acetyllysine; alternate. Serine 11 is modified (phosphoserine). Threonine 12 is modified (phosphothreonine). Residue lysine 15 is modified to N6-acetyllysine. N6-methyllysine; alternate occurs at positions 19, 24, and 28. 2 positions are modified to N6-acetyllysine; alternate: lysine 19 and lysine 24. At lysine 28 the chain carries N6,N6,N6-trimethyllysine; alternate. N6,N6-dimethyllysine; alternate is present on lysine 28. Serine 29 carries the post-translational modification Phosphoserine. Lysine 37 is subject to N6,N6,N6-trimethyllysine; alternate. Lysine 37 carries the post-translational modification N6,N6-dimethyllysine; alternate. At lysine 37 the chain carries N6-methyllysine; alternate.

It belongs to the histone H3 family. As to quaternary structure, the nucleosome is a histone octamer containing two molecules each of H2A, H2B, H3 and H4 assembled in one H3-H4 heterotetramer and two H2A-H2B heterodimers. The octamer wraps approximately 147 bp of DNA. In terms of processing, acetylation is generally linked to gene activation. Can be acetylated to form H3K9ac, H3K14ac, H3K18ac and H3K23ac. H3K9ac could compete with H3K9me and prevent gene silencing. H3K9ac is restricted to euchromatin. Post-translationally, methylated to form mainly H3K4me, H3K9me, H3K18me, H3K23me, H3K27me and H3K36me. H3K4me1/2/3, H3K9me3, H3K27me3 and H3K36me1/2/3 are typical marks for euchromatin, whereas heterochromatic chromocenters are enriched in H3K9me1/2 and H3K27me1/2. H2BK143ub1 is probably prerequisite for H3K4me. Can be phosphorylated to form H3S10ph, H3T11ph and H3S28ph.

The protein resides in the nucleus. Its subcellular location is the chromosome. Functionally, core component of nucleosome. Nucleosomes wrap and compact DNA into chromatin, limiting DNA accessibility to the cellular machineries which require DNA as a template. Histones thereby play a central role in transcription regulation, DNA repair, DNA replication and chromosomal stability. DNA accessibility is regulated via a complex set of post-translational modifications of histones, also called histone code, and nucleosome remodeling. The sequence is that of Histone H3.2 from Brassica napus (Rape).